The following is a 425-amino-acid chain: Histidine--tRNA ligase (425 aa).

It belongs to the class-II aminoacyl-tRNA synthetase family. Homodimer.

The protein localises to the cytoplasm. It carries out the reaction tRNA(His) + L-histidine + ATP = L-histidyl-tRNA(His) + AMP + diphosphate + H(+). This is Histidine--tRNA ligase from Shewanella sp. (strain MR-4).